The following is a 77-amino-acid chain: Putative neurotoxin 1 (77 aa).

The first 25 residues, 1–25 (MKAFIAILSIAIVLLLIVSIKETSA), serve as a signal peptide directing secretion. Residues 26-46 (KDCKQECVKRYTKGDLTNFLK) constitute a propeptide that is removed on maturation.

This sequence belongs to the scolopendra neurotoxin 3 family. In terms of processing, contains 2 disulfide bonds. As to expression, expressed by the venom gland.

It is found in the secreted. This chain is Putative neurotoxin 1, found in Scolopendra mutilans (Chinese red-headed centipede).